Consider the following 510-residue polypeptide: NAD(P)H-quinone oxidoreductase subunit 2 A, chloroplastic (510 aa).

13 consecutive transmembrane segments (helical) span residues 24–44 (LLLFDGSFIFPECILIFGLIL), 57–77 (IPWLYFISSTSLVMSITALLF), 99–119 (IFQFLILLCSTLCIPLSVEYI), 124–144 (MAITEFLLFVLTATLGGMFLC), 149–169 (LITIFVAPECFSLCSYLLSGY), 183–203 (YLLMGGASSSILVHGFSWLYG), 227–247 (PGISIALIFITVGIGFKLSPA), 295–315 (WHLLLEILAILSMILGNLIAI), 323–343 (MLAYSSIGQIGYVIIGIIVGD), 354–374 (YMLFYISMNLGTFACIVSFGL), 395–415 (ALSLALCLLSLGGLPPLAGFF), 418–438 (LHLFWCGWQAGLYFLVSIGLL), and 484–504 (MIVCVIASTIPGISMNPIIAI).

The protein belongs to the complex I subunit 2 family. As to quaternary structure, NDH is composed of at least 16 different subunits, 5 of which are encoded in the nucleus.

Its subcellular location is the plastid. The protein localises to the chloroplast thylakoid membrane. The enzyme catalyses a plastoquinone + NADH + (n+1) H(+)(in) = a plastoquinol + NAD(+) + n H(+)(out). It carries out the reaction a plastoquinone + NADPH + (n+1) H(+)(in) = a plastoquinol + NADP(+) + n H(+)(out). Its function is as follows. NDH shuttles electrons from NAD(P)H:plastoquinone, via FMN and iron-sulfur (Fe-S) centers, to quinones in the photosynthetic chain and possibly in a chloroplast respiratory chain. The immediate electron acceptor for the enzyme in this species is believed to be plastoquinone. Couples the redox reaction to proton translocation, and thus conserves the redox energy in a proton gradient. The sequence is that of NAD(P)H-quinone oxidoreductase subunit 2 A, chloroplastic from Vitis vinifera (Grape).